We begin with the raw amino-acid sequence, 648 residues long: Actin-related protein 5 (648 aa).

Residues 34–59 (LTKPRKDRKKEAAASEGSASQTTVEQ) form a disordered region. Coiled-coil stretches lie at residues 277-311 (TAEQ…EQQL) and 340-364 (TLED…RAQS). 2 disordered regions span residues 357–385 (RAQE…PEGM) and 403–455 (GRKQ…GMND). The segment covering 414 to 428 (EQAKRHTHAAQERMR) has biased composition (basic and acidic residues). Phosphoserine occurs at positions 471 and 473.

This sequence belongs to the actin family. ARP5 subfamily. Component of the chromatin remodeling Ino80 complex.

Its subcellular location is the nucleus. Proposed core component of the chromatin remodeling Ino80 complex which is involved in transcriptional regulation, DNA replication and probably DNA repair. The chain is Actin-related protein 5 from Drosophila melanogaster (Fruit fly).